A 335-amino-acid chain; its full sequence is Glutamyl-tRNA reductase (335 aa).

Substrate is bound by residues Thr60–Arg63, Ser110, Glu115–Glu117, and Gln121. Cys61 acts as the Nucleophile in catalysis. Residue Gly189–Asn194 participates in NADP(+) binding.

It belongs to the glutamyl-tRNA reductase family. As to quaternary structure, homodimer.

It carries out the reaction (S)-4-amino-5-oxopentanoate + tRNA(Glu) + NADP(+) = L-glutamyl-tRNA(Glu) + NADPH + H(+). Its pathway is porphyrin-containing compound metabolism; protoporphyrin-IX biosynthesis; 5-aminolevulinate from L-glutamyl-tRNA(Glu): step 1/2. Catalyzes the NADPH-dependent reduction of glutamyl-tRNA(Glu) to glutamate 1-semialdehyde (GSA). The protein is Glutamyl-tRNA reductase of Chlamydia trachomatis serovar L2 (strain ATCC VR-902B / DSM 19102 / 434/Bu).